Consider the following 447-residue polypeptide: MTSASSATIQPPRIPRVGFVSLGCPKATVDSERILTCLRAEGYLISPSYADADLVVVNTCGFIDSAVAESLETIGEALTENGKVIVTGCLGAKEDVIRQAHPSVLAVTGPQATEEVMQAIHRHLPKPHDPYLDLVPPQGIKLTPKHYAYLKISEGCNHRCTFCIIPSMRGDLVSRPVGNVLQEAQNLVDAGVRELLIISQDTSAYGVDIKYRTGFWQGRPIRSRITELARALGELGIWIRLHYVYPYPHVDELIPLMAEGKLLPYLDIPFQHGSKRILKLMKRPANSENVLARIRQWRDICPDIALRSTFIVGFPGETEQEFEELLAFLEEAQLDRVGAFAYSPVKGAAANALPDPVPSEIQQERLARLMQWQEEISKKRLAGKKGRILKVLVDTVDENGVIARSYADAPEIDGVVYIEPDFSIKPGDWVDVRITRTGIHDLWAKKI.

In terms of domain architecture, MTTase N-terminal spans 15–125; sequence PRVGFVSLGC…VMQAIHRHLP (111 aa). Residues C24, C60, C89, C156, C160, and C163 each coordinate [4Fe-4S] cluster. Positions 142–379 constitute a Radical SAM core domain; it reads LTPKHYAYLK…MQWQEEISKK (238 aa). The TRAM domain occupies 379–447; the sequence is KRLAGKKGRI…GIHDLWAKKI (69 aa).

This sequence belongs to the methylthiotransferase family. RimO subfamily. The cofactor is [4Fe-4S] cluster.

Its subcellular location is the cytoplasm. It catalyses the reaction L-aspartate(89)-[ribosomal protein uS12]-hydrogen + (sulfur carrier)-SH + AH2 + 2 S-adenosyl-L-methionine = 3-methylsulfanyl-L-aspartate(89)-[ribosomal protein uS12]-hydrogen + (sulfur carrier)-H + 5'-deoxyadenosine + L-methionine + A + S-adenosyl-L-homocysteine + 2 H(+). Catalyzes the methylthiolation of an aspartic acid residue of ribosomal protein uS12. This Nitrosomonas europaea (strain ATCC 19718 / CIP 103999 / KCTC 2705 / NBRC 14298) protein is Ribosomal protein uS12 methylthiotransferase RimO.